A 465-amino-acid chain; its full sequence is Cysteine--tRNA ligase (465 aa).

Residue C29 coordinates Zn(2+). The 'HIGH' region motif lies at 31–41; that stretch reads PTVYNYIHIGN. Zn(2+)-binding residues include C209, H234, and E238. Positions 266–270 match the 'KMSKS' region motif; sequence KMSKS. K269 lines the ATP pocket. A Phosphoserine modification is found at S270.

The protein belongs to the class-I aminoacyl-tRNA synthetase family. As to quaternary structure, monomer. Requires Zn(2+) as cofactor.

It localises to the cytoplasm. The enzyme catalyses tRNA(Cys) + L-cysteine + ATP = L-cysteinyl-tRNA(Cys) + AMP + diphosphate. The sequence is that of Cysteine--tRNA ligase from Bacillus cereus (strain AH187).